A 292-amino-acid polypeptide reads, in one-letter code: Arabinose operon regulatory protein (292 aa).

Residues Pro-8, Thr-24, Arg-38, Tyr-82, and His-93 each contribute to the alpha-L-arabinopyanose site. Residues 180-279 (REACQYISDH…GASPSEFRAG (100 aa)) form the HTH araC/xylS-type domain. 2 DNA-binding regions (H-T-H motif) span residues 198–219 (ASVA…RQQL) and 246–269 (IATV…KKCT).

As to quaternary structure, homodimer.

The protein localises to the cytoplasm. Arabinose converts the repressor form of AraC to the activator form to regulate the araBAD promoter. In the absence of arabinose, AraC binds to the araO2 and araI1 half-sites in the promoter region of the araBAD operon, leading to the formation of a DNA loop that blocks access of RNA polymerase to the promoter. In the presence of arabinose and the cyclic AMP receptor protein (CRP), it binds to the adjacent half-sites araI1 and araI2, leading to the binding of RNA polymerase to the promoter region and transcription of the araBAD operon. AraI1 acts as a switch mechanism allowing both the repressor and the activator forms of AraC protein to regulate the araBAD promoter. Inhibited by D-fucose, which binds competitively to the same site on the protein. Functionally, transcription factor that regulates the expression of several genes involved in the transport and metabolism of L-arabinose. Functions both as a positive and a negative regulator. In the presence of arabinose, activates the expression of the araBAD, araE, araFGH and araJ promoters. In the absence of arabinose, negatively regulates the araBAD operon. Represses its own transcription. Acts by binding directly to DNA. In Escherichia coli (strain K12), this protein is Arabinose operon regulatory protein.